We begin with the raw amino-acid sequence, 655 residues long: A-type voltage-gated potassium channel KCND3 (655 aa).

Topologically, residues 1-182 (MAAGVAAWLP…FENPHTSTLA (182 aa)) are cytoplasmic. 2 interaction with KCNIP1 regions span residues 6–21 (AAWL…GWMP) and 70–78 (EKEFFFNED). Zn(2+) is bound by residues His104, Cys110, Cys131, and Cys132. At Ser153 the chain carries Phosphoserine. Residues 183–204 (LVFYYVTGFFIAVSVITNVVET) form a helical membrane-spanning segment. At 205 to 223 (VPCGTVPGSKELPCGERYS) the chain is on the extracellular side. Residues 224–246 (VAFFCLDTACVMIFTVEYLLRLF) form a helical membrane-spanning segment. Over 247–253 (AAPSRYR) the chain is Cytoplasmic. The helical transmembrane segment at 254 to 277 (FIRSVMSIIDVVAIMPYYIGLVMT) threads the bilayer. Residues 278–283 (NNEDVS) are Extracellular-facing. The chain crosses the membrane as a helical; Voltage-sensor span at residues 284–306 (GAFVTLRVFRVFRIFKFSRHSQG). Topologically, residues 307-318 (LRILGYTLKSCA) are cytoplasmic. A helical membrane pass occupies residues 319–343 (SELGFLLFSLTMAIIIFATVMFYAE). Residues 344–352 (KGSSASKFT) lie on the Extracellular side of the membrane. An intramembrane region (helical) is located at residues 353 to 366 (SIPASFWYTIVTMT). 4 residues coordinate K(+): Thr367, Leu368, Gly369, and Tyr370. Residues 367 to 372 (TLGYGD) carry the Selectivity filter motif. An intramembrane segment occupies 367-374 (TLGYGDMV). Residues 378-400 (IAGKIFGSICSLSGVLVIALPVP) form a helical membrane-spanning segment. Residues 401-655 (VIVSNFSRIY…TSNVVKVSVL (255 aa)) are Cytoplasmic-facing. Thr459 is modified (phosphothreonine). Residues 470-487 (SLIESQHHHLLHCLEKTT) form an interaction with KCNIP1 and KCNIP2 region. A mediates dendritic targeting region spans residues 474-489 (SQHHHLLHCLEKTTGL). Positions 523–565 (SSMQNYPSTRSPSLSSHSGLTTTCCSRRSKKTTHLPNSNLPAT) are disordered. Positions 529–548 (PSTRSPSLSSHSGLTTTCCS) are enriched in low complexity. Position 569 is a phosphoserine; by CaMK2D (Ser569). Residue Ser585 is modified to Phosphoserine. Residues 616-647 (SIPTPPALTPEGESRPPPASPGPNTNIPSITS) form a disordered region. Residues 637-647 (GPNTNIPSITS) are compositionally biased toward polar residues.

The protein belongs to the potassium channel family. D (Shal) (TC 1.A.1.2) subfamily. Kv4.3/KCND3 sub-subfamily. In terms of assembly, homotetramer. Heterotetramer with KCND2. Associates with the regulatory subunits KCNIP3 and KCNIP4. Interacts with KCNE1, KCNE2, SCN1B and KCNAB1 and DLG1. Component of heteromultimeric potassium channels. Identified in potassium channel complexes containing KCND1, KCND2, KCND3, KCNIP1, KCNIP2, KCNIP3, KCNIP4, DPP6 and DPP10. Interacts with KCNIP1; each KCNIP1 monomer interacts with two adjacent KCND3 subunits, through both the N-terminal inactivation ball of a KCND3 subunit and a C-terminal helix from the adjacent KCND3 subunit, clamping them together; this interaction stabilizes the tetrameric form and modulates the channel gating kinetics namely channel activation and inactivation kinetics and rate of recovery from inactivation. Interacts with DPP6; this interaction modulates the channel gating kinetics namely channel activation and inactivation kinetics and rate of recovery from inactivation. Interacts with KCNIP2; each KCNIP2 monomer interacts with two adjacent KCND3 subunits, through both the N-terminal inactivation ball of a KCND3 subunit and a C-terminal helix from the adjacent KCND3 subunit, clamping them together; this interaction modulates the channel gating kinetics. In terms of processing, regulated through phosphorylation at Ser-569 by CaMK2D. Highly expressed in brain, in particular in the retrosplenial cortex, medial habenula, anterior thalamus, hippocampus, cerebellum and lateral geniculate and superior colliculus. Highly expressed in heart atrium (at protein level) and throughout the ventricle wall, in lung and vas deferens.

Its subcellular location is the cell membrane. It localises to the sarcolemma. The protein resides in the cell projection. The protein localises to the dendrite. It catalyses the reaction K(+)(in) = K(+)(out). Pore-forming (alpha) subunit of voltage-gated A-type potassium channels that mediates transmembrane potassium transport in excitable membranes, in brain and heart. In cardiomyocytes, may generate the transient outward potassium current I(To). In neurons, may conduct the transient subthreshold somatodendritic A-type potassium current (ISA). Kinetics properties are characterized by fast activation at subthreshold membrane potentials, rapid inactivation, and quick recovery from inactivation. Channel properties are modulated by interactions with regulatory subunits. Interaction with the regulatory subunits KCNIP1 or KCNIP2 modulates the channel gating kinetics namely channel activation and inactivation kinetics and rate of recovery from inactivation. Likewise, interaction with DPP6 modulates the channel gating kinetics namely channel activation and inactivation kinetics. This Rattus norvegicus (Rat) protein is A-type voltage-gated potassium channel KCND3.